The chain runs to 131 residues: Sec-independent protein translocase protein TatB (131 aa).

The chain crosses the membrane as a helical span at residues 2 to 22; that stretch reads LGSLSWEHMLVLVVVGLVVLG. The segment at 96–131 is disordered; sequence AFDRPVNGAAAQPPPAPAPPPEPHRPGQTPFDADAT. Pro residues predominate over residues 107–116; sequence QPPPAPAPPP.

The protein belongs to the TatB family. As to quaternary structure, the Tat system comprises two distinct complexes: a TatABC complex, containing multiple copies of TatA, TatB and TatC subunits, and a separate TatA complex, containing only TatA subunits. Substrates initially bind to the TatABC complex, which probably triggers association of the separate TatA complex to form the active translocon.

It is found in the cell membrane. Its function is as follows. Part of the twin-arginine translocation (Tat) system that transports large folded proteins containing a characteristic twin-arginine motif in their signal peptide across membranes. Together with TatC, TatB is part of a receptor directly interacting with Tat signal peptides. TatB may form an oligomeric binding site that transiently accommodates folded Tat precursor proteins before their translocation. The sequence is that of Sec-independent protein translocase protein TatB from Mycobacterium avium (strain 104).